Here is a 459-residue protein sequence, read N- to C-terminus: Bifunctional protein GlmU (459 aa).

Residues 1–229 form a pyrophosphorylase region; that stretch reads MTNYAIILAA…FDESLGVNDR (229 aa). UDP-N-acetyl-alpha-D-glucosamine-binding positions include 8–11, K22, Q72, and 77–78; these read LAAG and GT. D102 provides a ligand contact to Mg(2+). The UDP-N-acetyl-alpha-D-glucosamine site is built by G139, E154, N169, and N227. Residue N227 participates in Mg(2+) binding. The tract at residues 230 to 250 is linker; the sequence is VALATAESVMRRRINQKHMVN. The tract at residues 251 to 459 is N-acetyltransferase; the sequence is GVSFVNPDAT…KRLPHHPQNK (209 aa). Positions 332 and 350 each coordinate UDP-N-acetyl-alpha-D-glucosamine. Catalysis depends on H362, which acts as the Proton acceptor. Y365 and N376 together coordinate UDP-N-acetyl-alpha-D-glucosamine. Acetyl-CoA is bound by residues A379, 385-386, S404, A422, and R439; that span reads NY.

In the N-terminal section; belongs to the N-acetylglucosamine-1-phosphate uridyltransferase family. It in the C-terminal section; belongs to the transferase hexapeptide repeat family. In terms of assembly, homotrimer. The cofactor is Mg(2+).

The protein localises to the cytoplasm. The enzyme catalyses alpha-D-glucosamine 1-phosphate + acetyl-CoA = N-acetyl-alpha-D-glucosamine 1-phosphate + CoA + H(+). It carries out the reaction N-acetyl-alpha-D-glucosamine 1-phosphate + UTP + H(+) = UDP-N-acetyl-alpha-D-glucosamine + diphosphate. It participates in nucleotide-sugar biosynthesis; UDP-N-acetyl-alpha-D-glucosamine biosynthesis; N-acetyl-alpha-D-glucosamine 1-phosphate from alpha-D-glucosamine 6-phosphate (route II): step 2/2. It functions in the pathway nucleotide-sugar biosynthesis; UDP-N-acetyl-alpha-D-glucosamine biosynthesis; UDP-N-acetyl-alpha-D-glucosamine from N-acetyl-alpha-D-glucosamine 1-phosphate: step 1/1. The protein operates within bacterial outer membrane biogenesis; LPS lipid A biosynthesis. Functionally, catalyzes the last two sequential reactions in the de novo biosynthetic pathway for UDP-N-acetylglucosamine (UDP-GlcNAc). The C-terminal domain catalyzes the transfer of acetyl group from acetyl coenzyme A to glucosamine-1-phosphate (GlcN-1-P) to produce N-acetylglucosamine-1-phosphate (GlcNAc-1-P), which is converted into UDP-GlcNAc by the transfer of uridine 5-monophosphate (from uridine 5-triphosphate), a reaction catalyzed by the N-terminal domain. The polypeptide is Bifunctional protein GlmU (Streptococcus gordonii (strain Challis / ATCC 35105 / BCRC 15272 / CH1 / DL1 / V288)).